A 292-amino-acid polypeptide reads, in one-letter code: Elongation factor Ts (292 aa).

The interval 82 to 85 is involved in Mg(2+) ion dislocation from EF-Tu; that stretch reads TDFV.

This sequence belongs to the EF-Ts family.

It is found in the cytoplasm. In terms of biological role, associates with the EF-Tu.GDP complex and induces the exchange of GDP to GTP. It remains bound to the aminoacyl-tRNA.EF-Tu.GTP complex up to the GTP hydrolysis stage on the ribosome. This chain is Elongation factor Ts, found in Bordetella avium (strain 197N).